The sequence spans 285 residues: Urease accessory protein UreD 1 (285 aa).

Belongs to the UreD family. As to quaternary structure, ureD, UreF and UreG form a complex that acts as a GTP-hydrolysis-dependent molecular chaperone, activating the urease apoprotein by helping to assemble the nickel containing metallocenter of UreC. The UreE protein probably delivers the nickel.

The protein resides in the cytoplasm. Functionally, required for maturation of urease via the functional incorporation of the urease nickel metallocenter. The protein is Urease accessory protein UreD 1 of Pseudomonas syringae pv. tomato (strain ATCC BAA-871 / DC3000).